A 360-amino-acid polypeptide reads, in one-letter code: Probable neutral protease 2 homolog MCYG_04257 (360 aa).

An N-terminal signal peptide occupies residues 1 to 17 (MQLIAFLAALGVPVAFA). The propeptide occupies 18–182 (ATIPSVPLNH…KVKAGSIDKR (165 aa)). An intrachain disulfide couples Cys190 to Cys261. Residue Asn262 is glycosylated (N-linked (GlcNAc...) asparagine). 2 cysteine pairs are disulfide-bonded: Cys268-Cys286 and Cys300-Cys360. His311 is a Zn(2+) binding site. Glu312 is a catalytic residue. Residues His315 and Asp326 each contribute to the Zn(2+) site.

Belongs to the peptidase M35 family. It depends on Zn(2+) as a cofactor.

The protein resides in the secreted. It catalyses the reaction Preferential cleavage of bonds with hydrophobic residues in P1'. Also 3-Asn-|-Gln-4 and 8-Gly-|-Ser-9 bonds in insulin B chain.. Functionally, probable secreted metalloprotease that shows high activities on basic nuclear substrates such as histone and protamine. May be involved in virulence. The chain is Probable neutral protease 2 homolog MCYG_04257 from Arthroderma otae (strain ATCC MYA-4605 / CBS 113480) (Microsporum canis).